The following is a 154-amino-acid chain: 6,7-dimethyl-8-ribityllumazine synthase (154 aa).

Residues phenylalanine 22, 56–58, and 80–82 contribute to the 5-amino-6-(D-ribitylamino)uracil site; these read AFE and AVI. 85–86 serves as a coordination point for (2S)-2-hydroxy-3-oxobutyl phosphate; sequence ST. The active-site Proton donor is histidine 88. Phenylalanine 113 contributes to the 5-amino-6-(D-ribitylamino)uracil binding site. Residue arginine 127 coordinates (2S)-2-hydroxy-3-oxobutyl phosphate.

Belongs to the DMRL synthase family.

It catalyses the reaction (2S)-2-hydroxy-3-oxobutyl phosphate + 5-amino-6-(D-ribitylamino)uracil = 6,7-dimethyl-8-(1-D-ribityl)lumazine + phosphate + 2 H2O + H(+). Its pathway is cofactor biosynthesis; riboflavin biosynthesis; riboflavin from 2-hydroxy-3-oxobutyl phosphate and 5-amino-6-(D-ribitylamino)uracil: step 1/2. Its function is as follows. Catalyzes the formation of 6,7-dimethyl-8-ribityllumazine by condensation of 5-amino-6-(D-ribitylamino)uracil with 3,4-dihydroxy-2-butanone 4-phosphate. This is the penultimate step in the biosynthesis of riboflavin. The protein is 6,7-dimethyl-8-ribityllumazine synthase of Clostridium kluyveri (strain NBRC 12016).